A 269-amino-acid chain; its full sequence is GTP cyclohydrolase FolE2 (269 aa).

The protein belongs to the GTP cyclohydrolase IV family.

The enzyme catalyses GTP + H2O = 7,8-dihydroneopterin 3'-triphosphate + formate + H(+). The protein operates within cofactor biosynthesis; 7,8-dihydroneopterin triphosphate biosynthesis; 7,8-dihydroneopterin triphosphate from GTP: step 1/1. Functionally, converts GTP to 7,8-dihydroneopterin triphosphate. The polypeptide is GTP cyclohydrolase FolE2 (Burkholderia multivorans (strain ATCC 17616 / 249)).